The following is a 678-amino-acid chain: Putative pentatricopeptide repeat-containing protein At3g18840 (678 aa).

PPR repeat units follow at residues 22-56 (TAVSSNQLVNLYSKSGLLREARNVFDEMLERNVYS), 57-84 (WNAVIAAYVKFNNVKEARELFESDNCER), 85-116 (DLITYNTLLSGFAKTDGCESEAIEMFGEMHRK), 124-158 (DDFTVTTMVKLSAKLTNVFYGEQLHGVLVKTGNDG), 159-190 (TKFAVSSLIHMYSKCGKFKEVCNIFNGSCVEF), 192-222 (DSVARNAMIAAYCREGDIDKALSVFWRNPEL), 224-258 (DTISWNTLIAGYAQNGYEEEALKMAVSMEENGLKW), 259-293 (DEHSFGAVLNVLSSLKSLKIGKEVHARVLKNGSYS), 294-324 (NKFVSSGIVDVYCKCGNMKYAESAHLLYGFG), 325-359 (NLYSASSMIVGYSSQGKMVEAKRLFDSLSEKNLVV), 360-390 (WTAMFLGYLNLRQPDSVLELARAFIANETNT), 392-426 (DSLVMVSVLGACSLQAYMEPGKEIHGHSLRTGILM), 427-457 (DKKLVTAFVDMYSKCGNVEYAERIFDSSFER), 458-492 (DTVMYNAMIAGCAHHGHEAKSFQHFEDMTEGGFKP), 493-528 (DEITFMALLSACRHRGLVLEGEKYFKSMIEAYNISP), and 529-563 (ETGHYTCMIDLYGKAYRLDKAIELMEGIDQVEKDA). The type E motif stretch occupies residues 565 to 640 (ILGAFLNACS…FSGCSWANID (76 aa)). Residues 641 to 671 (KQFHMFTSSDISHYETEAIYAMLHFVTKDLS) form a type E(+) motif region.

It belongs to the PPR family. PCMP-E subfamily.

The protein is Putative pentatricopeptide repeat-containing protein At3g18840 (PCMP-E92) of Arabidopsis thaliana (Mouse-ear cress).